Reading from the N-terminus, the 345-residue chain is GTPase Obg (345 aa).

Positions 1 to 158 (MFIDSVKITL…RLVRLELKLI (158 aa)) constitute an Obg domain. An OBG-type G domain is found at 159–339 (ADVGLVGFPN…LKFMLLEEIK (181 aa)). GTP contacts are provided by residues 165–172 (GFPNVGKS), 190–194 (FTTLT), 212–215 (DIPG), 280–283 (SKSD), and 320–322 (SSL). Mg(2+) is bound by residues serine 172 and threonine 192.

The protein belongs to the TRAFAC class OBG-HflX-like GTPase superfamily. OBG GTPase family. As to quaternary structure, monomer. The cofactor is Mg(2+).

Its subcellular location is the cytoplasm. Functionally, an essential GTPase which binds GTP, GDP and possibly (p)ppGpp with moderate affinity, with high nucleotide exchange rates and a fairly low GTP hydrolysis rate. Plays a role in control of the cell cycle, stress response, ribosome biogenesis and in those bacteria that undergo differentiation, in morphogenesis control. This is GTPase Obg from Campylobacter jejuni subsp. jejuni serotype O:6 (strain 81116 / NCTC 11828).